The following is a 374-amino-acid chain: Ribosomal RNA large subunit methyltransferase G (374 aa).

Belongs to the methyltransferase superfamily. RlmG family.

Its subcellular location is the cytoplasm. The catalysed reaction is guanosine(1835) in 23S rRNA + S-adenosyl-L-methionine = N(2)-methylguanosine(1835) in 23S rRNA + S-adenosyl-L-homocysteine + H(+). Specifically methylates the guanine in position 1835 (m2G1835) of 23S rRNA. The sequence is that of Ribosomal RNA large subunit methyltransferase G from Pseudomonas fluorescens (strain ATCC BAA-477 / NRRL B-23932 / Pf-5).